Reading from the N-terminus, the 430-residue chain is Phosphomethylpyrimidine synthase (430 aa).

Residues asparagine 67, methionine 96, tyrosine 125, histidine 161, 183 to 185 (SRG), 224 to 227 (DALR), and glutamate 263 contribute to the substrate site. Histidine 267 is a binding site for Zn(2+). Tyrosine 290 contacts substrate. Residue histidine 331 participates in Zn(2+) binding. [4Fe-4S] cluster-binding residues include cysteine 406, cysteine 409, and cysteine 413.

The protein belongs to the ThiC family. In terms of assembly, homodimer. [4Fe-4S] cluster is required as a cofactor.

It catalyses the reaction 5-amino-1-(5-phospho-beta-D-ribosyl)imidazole + S-adenosyl-L-methionine = 4-amino-2-methyl-5-(phosphooxymethyl)pyrimidine + CO + 5'-deoxyadenosine + formate + L-methionine + 3 H(+). Its pathway is cofactor biosynthesis; thiamine diphosphate biosynthesis. In terms of biological role, catalyzes the synthesis of the hydroxymethylpyrimidine phosphate (HMP-P) moiety of thiamine from aminoimidazole ribotide (AIR) in a radical S-adenosyl-L-methionine (SAM)-dependent reaction. This Campylobacter jejuni (strain RM1221) protein is Phosphomethylpyrimidine synthase.